The primary structure comprises 459 residues: MVNLGTAVRSLLVHLIGLLVWQFDISISPVAAIVTDTFNSSDGGRLFQFPDGVQNWPALSIVVIIIMTIGGNILVIMAVSMEKKLHNATNYFLMSLAIADMLVGLLVMPLSLLAILYDYVWPLPRYLCPVWISLDVLFSTASIMHLCAISLDRYVAIRNPIEHSRFNSRTKAIMKIAIVWAISIGVSVPIPVIGLRDESKVFVNNTTCVLNDPNFVLIGSFVAFFIPLTIMVITYFLTIYVLRRQTLMLLRGHTEEELRNISLNFLKCCCKKGDEEENAPNPNPDQKPRRKKKEKRPRGTMQAINNEKKASKVLGIVFFVFLIMWCPFFITNILSVLCGKACNQKLMEKLLNVFVWIGYVCSGINPLVYTLFNKIYRRAFSKYLRCDYKPDKKPPVRQIPRVAATALSGRELNVNIYRHTNERVVRKANDTEPGIEMQVENLELPVNPSNVVSERISSV.

The signal sequence occupies residues 1 to 32 (MVNLGTAVRSLLVHLIGLLVWQFDISISPVAA). Topologically, residues 33–56 (IVTDTFNSSDGGRLFQFPDGVQNW) are extracellular. A helical transmembrane segment spans residues 57-81 (PALSIVVIIIMTIGGNILVIMAVSM). Topologically, residues 82-87 (EKKLHN) are cytoplasmic. A helical membrane pass occupies residues 88 to 112 (ATNYFLMSLAIADMLVGLLVMPLSL). The Extracellular portion of the chain corresponds to 113 to 129 (LAILYDYVWPLPRYLCP). Cys128 and Cys208 are oxidised to a cystine. Residues 130–152 (VWISLDVLFSTASIMHLCAISLD) traverse the membrane as a helical segment. Position 140 (Thr140) interacts with ergotamine. The DRY motif; important for ligand-induced conformation changes motif lies at 152–154 (DRY). The Cytoplasmic portion of the chain corresponds to 153–168 (RYVAIRNPIEHSRFNS). Residues 169–190 (RTKAIMKIAIVWAISIGVSVPI) form a helical membrane-spanning segment. The Extracellular segment spans residues 191 to 214 (PVIGLRDESKVFVNNTTCVLNDPN). Residues Asn204 and Asn205 are each glycosylated (N-linked (GlcNAc...) asparagine). Ergotamine is bound at residue Leu210. A helical membrane pass occupies residues 215–237 (FVLIGSFVAFFIPLTIMVITYFL). The Cytoplasmic segment spans residues 238 to 312 (TIYVLRRQTL…AINNEKKASK (75 aa)). A disordered region spans residues 274 to 302 (DEEENAPNPNPDQKPRRKKKEKRPRGTMQ). Positions 288 to 298 (PRRKKKEKRPR) are enriched in basic residues. A helical transmembrane segment spans residues 313–337 (VLGIVFFVFLIMWCPFFITNILSVL). The cysteines at positions 338 and 342 are disulfide-linked. Over 338–348 (CGKACNQKLME) the chain is Extracellular. Residues 349 to 371 (KLLNVFVWIGYVCSGINPLVYTL) traverse the membrane as a helical segment. Residues 365 to 369 (NPLVY) carry the NPxxY motif; important for ligand-induced conformation changes and signaling motif. Topologically, residues 372 to 459 (FNKIYRRAFS…NVVSERISSV (88 aa)) are cytoplasmic. The PDZ-binding motif lies at 457–459 (SSV).

The protein belongs to the G-protein coupled receptor 1 family. In terms of assembly, interacts with MPDZ. Interacts with ARRB2. Interacts with MPP3; this interaction stabilizes the receptor at the plasma membrane and prevents the desensitization of the HTR2C receptor-mediated calcium response. In terms of tissue distribution, detected in brain cortex, hypothalamus, brainstem and arcuate nucleus. Detected in the paraventricular nucleus of the hypothalamus.

Its subcellular location is the cell membrane. Its function is as follows. G-protein coupled receptor for 5-hydroxytryptamine (serotonin). Also functions as a receptor for various drugs and psychoactive substances, including ergot alkaloid derivatives, 1-2,5,-dimethoxy-4-iodophenyl-2-aminopropane (DOI) and lysergic acid diethylamide (LSD). Ligand binding causes a conformation change that triggers signaling via guanine nucleotide-binding proteins (G proteins) and modulates the activity of downstream effectors. HTR2C is coupled to G(q)/G(11) G alpha proteins and activates phospholipase C-beta, releasing diacylglycerol (DAG) and inositol 1,4,5-trisphosphate (IP3) second messengers that modulate the activity of phosphatidylinositol 3-kinase and promote the release of Ca(2+) ions from intracellular stores, respectively. Beta-arrestin family members inhibit signaling via G proteins and mediate activation of alternative signaling pathways. Regulates neuronal activity via the activation of short transient receptor potential calcium channels in the brain, and thereby modulates the activation of pro-opiomelanocortin neurons and the release of CRH that then regulates the release of corticosterone. Plays a role in the regulation of appetite and eating behavior, responses to anxiogenic stimuli and stress. Plays a role in insulin sensitivity and glucose homeostasis. In Mus musculus (Mouse), this protein is 5-hydroxytryptamine receptor 2C.